Here is a 335-residue protein sequence, read N- to C-terminus: Biotin synthase (335 aa).

A Radical SAM core domain is found at 43–269; sequence YFGKKVKLNM…INPTKEIRIA (227 aa). 3 residues coordinate [4Fe-4S] cluster: Cys-61, Cys-65, and Cys-68. Residues Cys-104, Cys-137, Cys-197, and Arg-267 each coordinate [2Fe-2S] cluster.

This sequence belongs to the radical SAM superfamily. Biotin synthase family. In terms of assembly, homodimer. The cofactor is [4Fe-4S] cluster. It depends on [2Fe-2S] cluster as a cofactor.

It catalyses the reaction (4R,5S)-dethiobiotin + (sulfur carrier)-SH + 2 reduced [2Fe-2S]-[ferredoxin] + 2 S-adenosyl-L-methionine = (sulfur carrier)-H + biotin + 2 5'-deoxyadenosine + 2 L-methionine + 2 oxidized [2Fe-2S]-[ferredoxin]. It participates in cofactor biosynthesis; biotin biosynthesis; biotin from 7,8-diaminononanoate: step 2/2. Functionally, catalyzes the conversion of dethiobiotin (DTB) to biotin by the insertion of a sulfur atom into dethiobiotin via a radical-based mechanism. The sequence is that of Biotin synthase from Staphylococcus aureus (strain USA300).